Consider the following 337-residue polypeptide: MNTEATHDQNEALTTGARLRNAREQLGLSQQAVAERLCLKVSTVRDIEEDKAPADLASTFLRGYIRSYARLVHIPEEELLPGLEKQAPLRAAKVAPMQSFSLGKRRKKRDGWLMTFTWLVLFVVIGLSGAWWWQDHKAQQEEITTMADQSSAELSSNSEQGQSVPLNTSTTTDPATTSTPPASVDTTATNTQTPVVTAPAPAVDPQQNAVVSPSQANVDTAATPAPTAATTPDGAAPLPTDQAGVTTPVADPNALVMNFTADCWLEVTDATGKKLFSGMQRKDGNLNLTGQAPYKLKIGAPAAVQIQYQGKPVDLSRFIRTNQVARLTLNAEQSPAQ.

Residues 1 to 111 (MNTEATHDQN…LGKRRKKRDG (111 aa)) are Cytoplasmic-facing. In terms of domain architecture, HTH cro/C1-type spans 19–71 (LRNAREQLGLSQQAVAERLCLKVSTVRDIEEDKAPADLASTFLRGYIRSYARL). A DNA-binding region (H-T-H motif) is located at residues 30 to 49 (QQAVAERLCLKVSTVRDIEE). A helical; Signal-anchor for type II membrane protein membrane pass occupies residues 112–132 (WLMTFTWLVLFVVIGLSGAWW). Residues 133 to 337 (WQDHKAQQEE…TLNAEQSPAQ (205 aa)) lie on the Periplasmic side of the membrane. The segment covering 145–167 (TMADQSSAELSSNSEQGQSVPLN) has biased composition (polar residues). Residues 145–236 (TMADQSSAEL…TAATTPDGAA (92 aa)) are disordered. The span at 168 to 207 (TSTTTDPATTSTPPASVDTTATNTQTPVVTAPAPAVDPQQ) shows a compositional bias: low complexity. The segment covering 208-218 (NAVVSPSQANV) has biased composition (polar residues). Residues 219–236 (DTAATPAPTAATTPDGAA) are compositionally biased toward low complexity.

This sequence belongs to the RodZ family.

The protein localises to the cell inner membrane. Functionally, cytoskeletal protein that is involved in cell-shape control through regulation of the length of the long axis. The sequence is that of Cytoskeleton protein RodZ from Escherichia coli O157:H7.